The following is a 449-amino-acid chain: Tubulin alpha-8 chain (449 aa).

Positions 1–4 (MREC) match the MREC motif motif. GTP contacts are provided by Gln11, Glu71, Ser140, Gly144, Thr145, Thr179, Asn206, and Asn228. Residue Glu71 coordinates Mg(2+). Glu254 is a catalytic residue.

This sequence belongs to the tubulin family. Dimer of alpha and beta chains. A typical microtubule is a hollow water-filled tube with an outer diameter of 25 nm and an inner diameter of 15 nM. Alpha-beta heterodimers associate head-to-tail to form protofilaments running lengthwise along the microtubule wall with the beta-tubulin subunit facing the microtubule plus end conferring a structural polarity. Microtubules usually have 13 protofilaments but different protofilament numbers can be found in some organisms and specialized cells. It depends on Mg(2+) as a cofactor. In terms of processing, some glutamate residues at the C-terminus are polyglycylated, resulting in polyglycine chains on the gamma-carboxyl group. Glycylation is mainly limited to tubulin incorporated into axonemes (cilia and flagella) whereas glutamylation is prevalent in neuronal cells, centrioles, axonemes, and the mitotic spindle. Both modifications can coexist on the same protein on adjacent residues, and lowering polyglycylation levels increases polyglutamylation, and reciprocally. Cilia and flagella glycylation is required for their stability and maintenance. Flagella glycylation controls sperm motility. Post-translationally, some glutamate residues at the C-terminus are polyglutamylated, resulting in polyglutamate chains on the gamma-carboxyl group. Polyglutamylation plays a key role in microtubule severing by spastin (SPAST). SPAST preferentially recognizes and acts on microtubules decorated with short polyglutamate tails: severing activity by SPAST increases as the number of glutamates per tubulin rises from one to eight, but decreases beyond this glutamylation threshold. Glutamylation is also involved in cilia motility. The C-terminal phenylalanine residue is cleaved by MATCAP1/KIAA0895L.

It is found in the cytoplasm. The protein localises to the cytoskeleton. The catalysed reaction is GTP + H2O = GDP + phosphate + H(+). Its function is as follows. Tubulin is the major constituent of microtubules, a cylinder consisting of laterally associated linear protofilaments composed of alpha- and beta-tubulin heterodimers. Microtubules grow by the addition of GTP-tubulin dimers to the microtubule end, where a stabilizing cap forms. Below the cap, tubulin dimers are in GDP-bound state, owing to GTPase activity of alpha-tubulin. The polypeptide is Tubulin alpha-8 chain (Tuba8) (Rattus norvegicus (Rat)).